A 334-amino-acid polypeptide reads, in one-letter code: Serine/threonine-protein kinase (334 aa).

The region spanning 53–333 (FEVLQPLQSG…DEILNFGMWT (281 aa)) is the Protein kinase domain. ATP-binding positions include 59–67 (LQSGSEGRV) and Lys82. Asp167 (proton acceptor) is an active-site residue.

This sequence belongs to the protein kinase superfamily. Ser/Thr protein kinase family.

The enzyme catalyses L-seryl-[protein] + ATP = O-phospho-L-seryl-[protein] + ADP + H(+). The catalysed reaction is L-threonyl-[protein] + ATP = O-phospho-L-threonyl-[protein] + ADP + H(+). Its function is as follows. Able to phosphorylate in vitro the major virion phosphoprotein phosphorylated in vivo. The protein is Serine/threonine-protein kinase (PK) of Sus scrofa (Pig).